The chain runs to 1268 residues: Vigilin (1268 aa).

Serine 2 is subject to N-acetylserine. Threonine 8 carries the post-translational modification Phosphothreonine. Residues serine 11, serine 31, and serine 35 each carry the phosphoserine modification. KH domains are found at residues 158 to 229 (PKEH…RLEV), 230 to 302 (EKAF…AVEV), 303 to 371 (KKSQ…SVAA), 372 to 442 (PSWL…EINI), 443 to 514 (DHKF…DLII), 515 to 588 (EQRF…SVPI), 589 to 660 (FKQF…EVSI), 661 to 734 (PAKL…DIRA), 735 to 807 (KPEY…SMLV), 808 to 880 (DPKH…ECAI), 881 to 979 (PQKF…EVEV), 980 to 1059 (PFDL…SVTV), 1060 to 1134 (DPKY…DVPL), and 1135 to 1209 (DHRV…ALQV). Threonine 295 and threonine 296 each carry phosphothreonine. A Phosphoserine modification is found at serine 317. At tyrosine 437 the chain carries Phosphotyrosine. Serine 645 is subject to Phosphoserine. Residues 914–944 (ENAVHSTEPVVQENGDEAGEGREAKDCDPGS) are disordered. Basic and acidic residues predominate over residues 932-944 (GEGREAKDCDPGS). Lysine 991 bears the N6-acetyllysine mark. A disordered region spans residues 1233 to 1268 (WTASSSEKAPDMSSSEEFPSFGAQVAPKTLPWGPKR). A compositionally biased stretch (polar residues) spans 1234-1249 (TASSSEKAPDMSSSEE). Serine 1247 and serine 1252 each carry phosphoserine.

It localises to the cytoplasm. The protein resides in the nucleus. In terms of biological role, appears to play a role in cell sterol metabolism. It may function to protect cells from over-accumulation of cholesterol. In Homo sapiens (Human), this protein is Vigilin (HDLBP).